We begin with the raw amino-acid sequence, 402 residues long: uncharacterized protein (402 aa).

12 helical membrane-spanning segments follow: residues 11–31 (LALAFLLGMLAILGPLNIDMY), 48–68 (LVQLSLTACLVGLTIGQLIVG), 80–100 (LLICIFLFALSSLFCALSPNI), 108–125 (FLQGFTASAGLVLSRAIV), 140–160 (LLMVITAVAPMVAPMTGGAIL), 167–187 (WHTIFHVLMIIGFLLVLLIAL), 219–239 (FMGYALTVGFIHGGSFAYVSG), 254–274 (VFSILFGINGLAIISGSFIIG), 286–306 (LRIAVITAMIATAVLLTMTMI), 308–328 (GPLATLVISIFIYMITIGMVL), 347–367 (SALLGMLPLLLGSIVSPLVGI), and 373–393 (VPMGAIMFVTAVIGSLAFFGL).

This sequence belongs to the major facilitator superfamily. Bcr/CmlA family.

The protein resides in the cell membrane. This is an uncharacterized protein from Bacillus subtilis (strain 168).